The primary structure comprises 226 residues: Ribose-5-phosphate isomerase A (226 aa).

Substrate-binding positions include 29 to 32 (TGST), 84 to 87 (DGAD), and 97 to 100 (KGGG). Glu-106 (proton acceptor) is an active-site residue. Lys-124 contacts substrate.

The protein belongs to the ribose 5-phosphate isomerase family. In terms of assembly, homodimer.

The catalysed reaction is aldehydo-D-ribose 5-phosphate = D-ribulose 5-phosphate. It functions in the pathway carbohydrate degradation; pentose phosphate pathway; D-ribose 5-phosphate from D-ribulose 5-phosphate (non-oxidative stage): step 1/1. Catalyzes the reversible conversion of ribose-5-phosphate to ribulose 5-phosphate. The protein is Ribose-5-phosphate isomerase A of Methanothermobacter thermautotrophicus (strain ATCC 29096 / DSM 1053 / JCM 10044 / NBRC 100330 / Delta H) (Methanobacterium thermoautotrophicum).